Here is an 83-residue protein sequence, read N- to C-terminus: uncharacterized protein (83 aa).

Residues 40–65 (RMQAGASPDEDNDVNGETSFSRSFGG) form a disordered region. Polar residues predominate over residues 54-65 (NGETSFSRSFGG).

This is an uncharacterized protein from Dictyostelium discoideum (Social amoeba).